Consider the following 1399-residue polypeptide: Stress response protein NST1 (1399 aa).

The span at 28–52 (SANTQGNSHQIPRKQSQSTNSNHQE) shows a compositional bias: polar residues. Disordered stretches follow at residues 28-105 (SANT…VIKQ), 119-155 (EDEN…NEST), 202-249 (TRHH…NNGN), 318-353 (QQKY…QDQN), 546-574 (TVIS…VDDD), 589-681 (NPHH…EEEK), 722-894 (EAEE…VNDD), 949-990 (AKLM…SSFQ), 1134-1178 (SGNQ…NNNN), and 1373-1399 (PPIG…RLWN). Low complexity predominate over residues 53–69 (QSQQARNQSSQSNTNTT). Residues 70–82 (SRKKRKKHKKKSK) show a composition bias toward basic residues. Polar residues predominate over residues 140–154 (SSKSNTRKNSSVNES). A compositionally biased stretch (low complexity) spans 207 to 249 (QQQLSSSVSSQPQQQQSQQNVSTSSNNGSSSGINNNSNNNNGN). Positions 331–340 (STSVSPQPES) are enriched in polar residues. Basic and acidic residues predominate over residues 341-353 (QDNKQLKKSQDQN). Polar residues predominate over residues 547–566 (VISQNPQEQKSVSIGQSDQS). Residues 591-618 (HHHHHHHQHSNKQHDHHHCHNHRHRHRR) are compositionally biased toward basic residues. Positions 622–678 (ELDDEHDQENEDEELEDDEEDYYDEYDDDEEEDEEEDEDDDDIEEEGASDTESEISE) are enriched in acidic residues. Positions 708-896 (KLSQDRTQKL…TKLMVNDDDE (189 aa)) form a coiled coil. 2 stretches are compositionally biased toward basic and acidic residues: residues 722 to 743 (EAEE…EKAK) and 752 to 888 (AKEE…ERTK). A compositionally biased stretch (low complexity) spans 1134–1156 (SGNQSGISAPTTTSTNTSSRNNS). 2 stretches are compositionally biased toward polar residues: residues 1157–1172 (IWGN…PSLL) and 1377–1390 (ESST…NVGN).

The protein belongs to the NST1 family.

It localises to the cytoplasm. Its function is as follows. May act as a negative regulator of salt tolerance. The chain is Stress response protein NST1 (NST1) from Candida albicans (strain SC5314 / ATCC MYA-2876) (Yeast).